The sequence spans 266 residues: Thymidylate synthase (266 aa).

A dUMP-binding site is contributed by arginine 24. Residue histidine 54 participates in (6R)-5,10-methylene-5,6,7,8-tetrahydrofolate binding. 129-130 provides a ligand contact to dUMP; sequence RR. Catalysis depends on cysteine 149, which acts as the Nucleophile. DUMP-binding positions include 169–172, asparagine 180, and 210–212; these read RSAD and HIY. Residue aspartate 172 coordinates (6R)-5,10-methylene-5,6,7,8-tetrahydrofolate. A (6R)-5,10-methylene-5,6,7,8-tetrahydrofolate-binding site is contributed by alanine 265.

This sequence belongs to the thymidylate synthase family. Bacterial-type ThyA subfamily. As to quaternary structure, homodimer.

The protein localises to the cytoplasm. It carries out the reaction dUMP + (6R)-5,10-methylene-5,6,7,8-tetrahydrofolate = 7,8-dihydrofolate + dTMP. The protein operates within pyrimidine metabolism; dTTP biosynthesis. Its function is as follows. Catalyzes the reductive methylation of 2'-deoxyuridine-5'-monophosphate (dUMP) to 2'-deoxythymidine-5'-monophosphate (dTMP) while utilizing 5,10-methylenetetrahydrofolate (mTHF) as the methyl donor and reductant in the reaction, yielding dihydrofolate (DHF) as a by-product. This enzymatic reaction provides an intracellular de novo source of dTMP, an essential precursor for DNA biosynthesis. This chain is Thymidylate synthase, found in Mycobacterium sp. (strain KMS).